The following is a 441-amino-acid chain: Glutamyl-tRNA reductase (441 aa).

Substrate contacts are provided by residues 47 to 50, Ser-110, 115 to 117, and Gln-121; these read TCNR and ERE. Cys-48 serves as the catalytic Nucleophile. NADP(+) is bound at residue 192-197; that stretch reads GTGAYA.

This sequence belongs to the glutamyl-tRNA reductase family. Homodimer.

The enzyme catalyses (S)-4-amino-5-oxopentanoate + tRNA(Glu) + NADP(+) = L-glutamyl-tRNA(Glu) + NADPH + H(+). It participates in porphyrin-containing compound metabolism; protoporphyrin-IX biosynthesis; 5-aminolevulinate from L-glutamyl-tRNA(Glu): step 1/2. Functionally, catalyzes the NADPH-dependent reduction of glutamyl-tRNA(Glu) to glutamate 1-semialdehyde (GSA). This Pseudarthrobacter chlorophenolicus (strain ATCC 700700 / DSM 12829 / CIP 107037 / JCM 12360 / KCTC 9906 / NCIMB 13794 / A6) (Arthrobacter chlorophenolicus) protein is Glutamyl-tRNA reductase.